A 234-amino-acid polypeptide reads, in one-letter code: Fibrillarin-like rRNA/tRNA 2'-O-methyltransferase (234 aa).

Residues 90–91, 109–110, 134–135, and 154–157 each bind S-adenosyl-L-methionine; these read TT, EF, DA, and DIAQ.

This sequence belongs to the methyltransferase superfamily. Fibrillarin family. Interacts with nop5. Component of box C/D small ribonucleoprotein (sRNP) particles that contain rpl7ae, FlpA and nop5, plus a guide RNA.

Involved in pre-rRNA and tRNA processing. Utilizes the methyl donor S-adenosyl-L-methionine to catalyze the site-specific 2'-hydroxyl methylation of ribose moieties in rRNA and tRNA. Site specificity is provided by a guide RNA that base pairs with the substrate. Methylation occurs at a characteristic distance from the sequence involved in base pairing with the guide RNA. This Staphylothermus marinus (strain ATCC 43588 / DSM 3639 / JCM 9404 / F1) protein is Fibrillarin-like rRNA/tRNA 2'-O-methyltransferase.